The primary structure comprises 156 residues: 6,7-dimethyl-8-ribityllumazine synthase (156 aa).

5-amino-6-(D-ribitylamino)uracil-binding positions include Phe23, 57–59 (AFE), and 81–83 (AVI). 86 to 87 (AT) is a binding site for (2S)-2-hydroxy-3-oxobutyl phosphate. The active-site Proton donor is the His89. Residue Phe114 coordinates 5-amino-6-(D-ribitylamino)uracil. Arg128 lines the (2S)-2-hydroxy-3-oxobutyl phosphate pocket.

The protein belongs to the DMRL synthase family.

It carries out the reaction (2S)-2-hydroxy-3-oxobutyl phosphate + 5-amino-6-(D-ribitylamino)uracil = 6,7-dimethyl-8-(1-D-ribityl)lumazine + phosphate + 2 H2O + H(+). It participates in cofactor biosynthesis; riboflavin biosynthesis; riboflavin from 2-hydroxy-3-oxobutyl phosphate and 5-amino-6-(D-ribitylamino)uracil: step 1/2. Its function is as follows. Catalyzes the formation of 6,7-dimethyl-8-ribityllumazine by condensation of 5-amino-6-(D-ribitylamino)uracil with 3,4-dihydroxy-2-butanone 4-phosphate. This is the penultimate step in the biosynthesis of riboflavin. The chain is 6,7-dimethyl-8-ribityllumazine synthase from Campylobacter concisus (strain 13826).